The sequence spans 314 residues: MTFPHRHLLGIEALRPEEINTLLDLADKYAALNRQPDKHADALKGLTQINMFFENSTRTQASFEIAGKRLGADVMNMAMQASSVKKGETLIDTALTLNAMHPDLLVVRHPQSGAVDLLAQKVNCAVLNAGDGRHEHPTQALLDALTIRRAKGRLHRLSIAICGDIAHSRVARSNIMLLGKMENRIRLIGPPTLMPSGISEFGVEVFNDMNAGLKDVDVVMMLRLQKERMDGGFIPSEREYYHRFGLDADKLSNAKPDAIIMHPGPMNRGVEIDGTLADDINRSVIQDQVEMGVAVRMAAMDLLSQNLRLTRGAE.

Carbamoyl phosphate-binding residues include R58 and T59. Residue K86 coordinates L-aspartate. Carbamoyl phosphate is bound by residues R108, H136, and Q139. Residues R169 and R223 each coordinate L-aspartate. Carbamoyl phosphate-binding residues include G264 and P265.

The protein belongs to the aspartate/ornithine carbamoyltransferase superfamily. ATCase family. Heterododecamer (2C3:3R2) of six catalytic PyrB chains organized as two trimers (C3), and six regulatory PyrI chains organized as three dimers (R2).

It carries out the reaction carbamoyl phosphate + L-aspartate = N-carbamoyl-L-aspartate + phosphate + H(+). Its pathway is pyrimidine metabolism; UMP biosynthesis via de novo pathway; (S)-dihydroorotate from bicarbonate: step 2/3. Catalyzes the condensation of carbamoyl phosphate and aspartate to form carbamoyl aspartate and inorganic phosphate, the committed step in the de novo pyrimidine nucleotide biosynthesis pathway. The protein is Aspartate carbamoyltransferase catalytic subunit of Roseobacter denitrificans (strain ATCC 33942 / OCh 114) (Erythrobacter sp. (strain OCh 114)).